The sequence spans 392 residues: MFHKFISTLTNKKITQTIMGTINKENIKPAMLLSAFGDACGYKNGIWEFEKSPSRIYEHYEYLGGYKNLKINKKDWRLSDDTIMHIATAIAITRPTNTDNESICKELAKAYIHSMEDMAGRAPGIQTINSVSLMTQTGMRSKVYQWNEIDFSDRAGGCGGSMRSMCIGFKYWSDEQLDTLIELSIESGRITHNNPVGFLGALVSALFASYAIRSIPPKTWPLKLMTEVMPKAREYLEKTSNSSNRNIENYEKGWNYFWNSWKSYLKLRQIPSNPDELKAANDKGIDYPVFPKDYSDYKVRENFYHSISFSGWGGSSGHDSCIIAYDALLGSADNWEEMIKRSVLHGGDNDSTGAIGCCWWGALYGFNGVPECNYEKIEYKSIIEGLAKEISN.

Mg(2+) is bound by residues S79, D80, and D81. K109 is a binding site for substrate. Positions 125–127 are substrate; that stretch reads IQT. G159 is a binding site for substrate. Substrate stretches follow at residues 192 to 194, 309 to 311, and 315 to 316; these read HNN, FSG, and SS. Residues D348, D350, and S351 each contribute to the Mg(2+) site.

It belongs to the ADP-ribosylglycohydrolase family. As to quaternary structure, monomer. Mg(2+) serves as cofactor.

It catalyses the reaction N(omega)-(ADP-D-ribosyl)-L-arginyl-[protein] + H2O = ADP-D-ribose + L-arginyl-[protein]. Functionally, specifically acts as an arginine mono-ADP-ribosylhydrolase by mediating the removal of mono-ADP-ribose attached to arginine residues on proteins. The sequence is that of ADP-ribosylhydrolase ARH1 (adprh) from Dictyostelium discoideum (Social amoeba).